The sequence spans 375 residues: Pulmonary surfactant-associated protein D (375 aa).

Positions M1–E20 are cleaved as a signal peptide. C35 and C40 each carry S-nitrosocysteine. Residues S45–L221 form a disordered region. Residues G46–P222 form the Collagen-like domain. Residues R50–D65 are compositionally biased toward basic and acidic residues. Residues P66–P86 are compositionally biased toward low complexity. P78 is subject to 4-hydroxyproline. K87 carries the post-translational modification 5-hydroxylysine. The N-linked (GlcNAc...) asparagine glycan is linked to N90. Residue P96 is modified to 4-hydroxyproline. At K99 the chain carries 5-hydroxylysine. The segment covering S105–P114 has biased composition (pro residues). Low complexity-rich tracts occupy residues P116 to Q132 and K138 to P150. 4-hydroxyproline is present on residues P171 and P177. Over residues K204 to K216 the composition is skewed to basic and acidic residues. A coiled-coil region spans residues D223 to E252. The region spanning V260–F375 is the C-type lectin domain. 2 disulfide bridges follow: C281–C373 and C351–C365.

It belongs to the SFTPD family. As to quaternary structure, oligomeric complex of 4 set of homotrimers. In terms of processing, the N-terminus is blocked. Hydroxylation on proline residues within the sequence motif, GXPG, is most likely to be 4-hydroxy as this fits the requirement for 4-hydroxylation in vertebrates. Post-translationally, S-nitrosylation at Cys-35 and Cys-40 alters the quaternary structure which results in a pro-inflammatory chemoattractive signaling activity with macrophages. As to expression, expressed in lung, brain, pancreas and adipose tissue (mainly mature adipocytes).

Its subcellular location is the secreted. It is found in the extracellular space. The protein localises to the extracellular matrix. The protein resides in the surface film. Its function is as follows. Contributes to the lung's defense against inhaled microorganisms, organic antigens and toxins. Interacts with compounds such as bacterial lipopolysaccharides, oligosaccharides and fatty acids and modulates leukocyte action in immune response. May participate in the extracellular reorganization or turnover of pulmonary surfactant. Binds strongly maltose residues and to a lesser extent other alpha-glucosyl moieties. In Homo sapiens (Human), this protein is Pulmonary surfactant-associated protein D (SFTPD).